The chain runs to 191 residues: Ferric nitrobindin-like protein (191 aa).

The GXWXGXG motif lies at 20-26 (GDWAGAG).

It belongs to the nitrobindin family.

The sequence is that of Ferric nitrobindin-like protein from Streptomyces coelicolor (strain ATCC BAA-471 / A3(2) / M145).